The sequence spans 252 residues: Geranylgeranylglyceryl phosphate synthase (252 aa).

Asp26 and Ser55 together coordinate Mg(2+). Sn-glycerol 1-phosphate contacts are provided by residues 174–180 (YLEAGSG), 205–206 (GG), and 227–228 (GT).

The protein belongs to the GGGP/HepGP synthase family. Group II subfamily. Homotetramer. Homohexamer. Mg(2+) serves as cofactor.

It localises to the cytoplasm. It catalyses the reaction sn-glycerol 1-phosphate + (2E,6E,10E)-geranylgeranyl diphosphate = sn-3-O-(geranylgeranyl)glycerol 1-phosphate + diphosphate. Its pathway is membrane lipid metabolism; glycerophospholipid metabolism. Prenyltransferase that catalyzes the transfer of the geranylgeranyl moiety of geranylgeranyl diphosphate (GGPP) to the C3 hydroxyl of sn-glycerol-1-phosphate (G1P). This reaction is the first ether-bond-formation step in the biosynthesis of archaeal membrane lipids. This Thermococcus kodakarensis (strain ATCC BAA-918 / JCM 12380 / KOD1) (Pyrococcus kodakaraensis (strain KOD1)) protein is Geranylgeranylglyceryl phosphate synthase.